The following is a 215-amino-acid chain: Transcription factor LAX PANICLE 1 (215 aa).

The interval 1–48 is disordered; that stretch reads MHDPRGFPIHPQPYHLHPTAGGLGEGRMRGGGRRRPGAKLSTDPQSVA. The segment at 40–53 is basic motif; degenerate; it reads LSTDPQSVAARERR. In terms of domain architecture, bHLH spans 40–89; the sequence is LSTDPQSVAARERRHRISDRFRVLRSLVPGGSKMDTVSMLEQAIHYVKFL. Residues 54 to 89 are helix-loop-helix motif; that stretch reads HRISDRFRVLRSLVPGGSKMDTVSMLEQAIHYVKFL.

This sequence belongs to the bHLH protein family. In terms of assembly, efficient DNA binding requires dimerization with another bHLH protein. Interacts with LAX2. Expressed in the boundary between the shoot apical meristem (SAM) and the region of new meristem formation.

The protein resides in the nucleus. Functionally, transcription factor that seems to regulate organogenesis in postembryonic development. Involved in the regulation of shoot branching by controlling axillary meristem initiation. Functions in association with LAX2 to regulate the process of AM formation. Possesses transactivation activity in yeast. The sequence is that of Transcription factor LAX PANICLE 1 from Oryza sativa subsp. japonica (Rice).